Here is a 288-residue protein sequence, read N- to C-terminus: Small ribosomal subunit protein uS15m (288 aa).

A mitochondrion-targeting transit peptide spans 1–50 (MRLFEGAFQPWKLASTNLMQQCLLLNKKSQFHTTCILQGLKKQKANQRRK).

This sequence belongs to the universal ribosomal protein uS15 family. Component of the mitochondrial small ribosomal subunit (mt-SSU). Mature yeast 74S mitochondrial ribosomes consist of a small (37S) and a large (54S) subunit. The 37S small subunit contains a 15S ribosomal RNA (15S mt-rRNA) and at least 32 different proteins. The 54S large subunit contains a 21S rRNA (21S mt-rRNA) and at least 45 different proteins.

It localises to the mitochondrion. Component of the mitochondrial ribosome (mitoribosome), a dedicated translation machinery responsible for the synthesis of mitochondrial genome-encoded proteins, including at least some of the essential transmembrane subunits of the mitochondrial respiratory chain. The mitoribosomes are attached to the mitochondrial inner membrane and translation products are cotranslationally integrated into the membrane. This chain is Small ribosomal subunit protein uS15m (mrps28), found in Schizosaccharomyces pombe (strain 972 / ATCC 24843) (Fission yeast).